Here is a 245-residue protein sequence, read N- to C-terminus: Biosynthetic peptidoglycan transglycosylase (245 aa).

A helical transmembrane segment spans residues 20–42 (VYAGSVFAGAWLATQLFYLAQIA).

It belongs to the glycosyltransferase 51 family.

It is found in the cell inner membrane. The enzyme catalyses [GlcNAc-(1-&gt;4)-Mur2Ac(oyl-L-Ala-gamma-D-Glu-L-Lys-D-Ala-D-Ala)](n)-di-trans,octa-cis-undecaprenyl diphosphate + beta-D-GlcNAc-(1-&gt;4)-Mur2Ac(oyl-L-Ala-gamma-D-Glu-L-Lys-D-Ala-D-Ala)-di-trans,octa-cis-undecaprenyl diphosphate = [GlcNAc-(1-&gt;4)-Mur2Ac(oyl-L-Ala-gamma-D-Glu-L-Lys-D-Ala-D-Ala)](n+1)-di-trans,octa-cis-undecaprenyl diphosphate + di-trans,octa-cis-undecaprenyl diphosphate + H(+). It functions in the pathway cell wall biogenesis; peptidoglycan biosynthesis. Its function is as follows. Peptidoglycan polymerase that catalyzes glycan chain elongation from lipid-linked precursors. The sequence is that of Biosynthetic peptidoglycan transglycosylase from Burkholderia orbicola (strain MC0-3).